The following is a 567-amino-acid chain: Dihydroxy-acid dehydratase 2 (567 aa).

Position 56 (Cys56) interacts with [2Fe-2S] cluster. Asp88 is a Mg(2+) binding site. Residue Cys129 participates in [2Fe-2S] cluster binding. Residues Asp130 and Lys131 each coordinate Mg(2+). Lys131 carries the post-translational modification N6-carboxylysine. Cys206 is a binding site for [2Fe-2S] cluster. Glu457 is a Mg(2+) binding site. Ser483 (proton acceptor) is an active-site residue.

This sequence belongs to the IlvD/Edd family. As to quaternary structure, homodimer. [2Fe-2S] cluster serves as cofactor. Mg(2+) is required as a cofactor.

It catalyses the reaction (2R)-2,3-dihydroxy-3-methylbutanoate = 3-methyl-2-oxobutanoate + H2O. The catalysed reaction is (2R,3R)-2,3-dihydroxy-3-methylpentanoate = (S)-3-methyl-2-oxopentanoate + H2O. The protein operates within amino-acid biosynthesis; L-isoleucine biosynthesis; L-isoleucine from 2-oxobutanoate: step 3/4. Its pathway is amino-acid biosynthesis; L-valine biosynthesis; L-valine from pyruvate: step 3/4. Functionally, functions in the biosynthesis of branched-chain amino acids. Catalyzes the dehydration of (2R,3R)-2,3-dihydroxy-3-methylpentanoate (2,3-dihydroxy-3-methylvalerate) into 2-oxo-3-methylpentanoate (2-oxo-3-methylvalerate) and of (2R)-2,3-dihydroxy-3-methylbutanoate (2,3-dihydroxyisovalerate) into 2-oxo-3-methylbutanoate (2-oxoisovalerate), the penultimate precursor to L-isoleucine and L-valine, respectively. The chain is Dihydroxy-acid dehydratase 2 from Corynebacterium efficiens (strain DSM 44549 / YS-314 / AJ 12310 / JCM 11189 / NBRC 100395).